Consider the following 265-residue polypeptide: H-2 class II histocompatibility antigen, A beta chain (265 aa).

The signal sequence occupies residues 1–27 (MALQIPSLLLSAAVVVLMVLSSPGTEG). Residues 28-122 (GDSERHFVYQ…PETHTSLRRL (95 aa)) form a beta-1 region. At 28 to 226 (GDSERHFVYQ…RAQSESAWSK (199 aa)) the chain is on the extracellular side. Disulfide bonds link cysteine 42-cysteine 106 and cysteine 145-cysteine 201. Asparagine 46 carries an N-linked (GlcNAc...) asparagine glycan. The segment at 123 to 216 (EQPNVVISLS…SLKSPITVEW (94 aa)) is beta-2. Residues 125 to 213 (PNVVISLSRT…EHPSLKSPIT (89 aa)) enclose the Ig-like C1-type domain. Positions 217–226 (RAQSESAWSK) are connecting peptide. The helical transmembrane segment at 227–247 (MLSGIGGCVLGVIFLGLGLFI) threads the bilayer. Residues 248–265 (RHRSQKGPRGPPPAGLLQ) are Cytoplasmic-facing.

This sequence belongs to the MHC class II family. Ubiquitinated in immature dendritic cells leading to down-regulation of MHC class II.

Its subcellular location is the membrane. This Mus musculus (Mouse) protein is H-2 class II histocompatibility antigen, A beta chain (H2-Ab1).